Here is a 269-residue protein sequence, read N- to C-terminus: SF-assemblin (269 aa).

Positions 1-23 (MSISPGRSFSPMRASGLTGITSA) are disordered. A nonhelical region region spans residues 1 to 24 (MSISPGRSFSPMRASGLTGITSAG). Positions 25 to 269 (PTAKLEHVSE…LQEGLKLVST (245 aa)) are rod. A coiled-coil region spans residues 98–144 (AERSAAQHVDMQNSLKQAVDSLSNRLQDLHSLVREEREQRRNDIEHL).

This sequence belongs to the SF-assemblin family.

The protein localises to the cytoplasm. It is found in the cytoskeleton. Major component of the striated microtubule-associated fibers (SMAFs; system-I-fibers). The protein is SF-assemblin of Chlamydomonas moewusii (Chlamydomonas eugametos).